A 109-amino-acid chain; its full sequence is Major allergen I polypeptide chain 2 (109 aa).

Residues 1–17 (MRGALLVLALLVTQALG) form the signal peptide. N50 is a glycosylation site (N-linked (GlcNAc...) asparagine).

Belongs to the secretoglobin family. Heterotetramer composed of two non-covalently linked disulfide-linked heterodimer of chains 1 and 2. The long form is preferentially expressed in the salivary gland, while the short form is preferentially expressed in the skin.

Its subcellular location is the secreted. The chain is Major allergen I polypeptide chain 2 (CH2) from Felis catus (Cat).